Here is a 297-residue protein sequence, read N- to C-terminus: Calponin-1 (297 aa).

Residues 28 to 131 (HQREQELREW…STLLALASMA (104 aa)) form the Calponin-homology (CH) domain. 3 Calponin-like repeats span residues 164–189 (IGLQ…RHLY), 204–229 (ISLQ…RQIF), and 243–268 (VSLQ…RQVY). Phosphothreonine; by ROCK2 is present on threonine 170. Serine 175 carries the post-translational modification Phosphoserine; by ROCK2. Threonine 180 and threonine 184 each carry phosphothreonine; by ROCK2. Threonine 259 bears the Phosphothreonine; by ROCK2 mark.

This sequence belongs to the calponin family. In terms of assembly, part of cGMP kinase signaling complex at least composed of ACTA2/alpha-actin, CNN1/calponin H1, PLN/phospholamban, PRKG1 and ITPR1.

Functionally, thin filament-associated protein that is implicated in the regulation and modulation of smooth muscle contraction. It is capable of binding to actin, calmodulin and tropomyosin. The interaction of calponin with actin inhibits the actomyosin Mg-ATPase activity. In Ovis aries (Sheep), this protein is Calponin-1 (CNN1).